The chain runs to 490 residues: Betaine aldehyde dehydrogenase (490 aa).

T26, I27, and D93 together coordinate K(+). 150 to 152 (GAW) provides a ligand contact to NAD(+). K162 (charge relay system) is an active-site residue. 176-179 (KPSE) provides a ligand contact to NAD(+). V180 contacts K(+). Residue 230–233 (GVAS) participates in NAD(+) binding. K(+) is bound at residue L246. The active-site Proton acceptor is E252. Residues G254, C286, and E387 each contribute to the NAD(+) site. The Nucleophile role is filled by C286. The residue at position 286 (C286) is a Cysteine sulfenic acid (-SOH). K(+) is bound by residues K457 and G460. E464 serves as the catalytic Charge relay system.

This sequence belongs to the aldehyde dehydrogenase family. Dimer of dimers. K(+) is required as a cofactor.

It catalyses the reaction betaine aldehyde + NAD(+) + H2O = glycine betaine + NADH + 2 H(+). It functions in the pathway amine and polyamine biosynthesis; betaine biosynthesis via choline pathway; betaine from betaine aldehyde: step 1/1. Functionally, involved in the biosynthesis of the osmoprotectant glycine betaine. Catalyzes the irreversible oxidation of betaine aldehyde to the corresponding acid. This chain is Betaine aldehyde dehydrogenase, found in Escherichia coli O7:K1 (strain IAI39 / ExPEC).